We begin with the raw amino-acid sequence, 122 residues long: Large ribosomal subunit protein uL14c (122 aa).

Belongs to the universal ribosomal protein uL14 family. In terms of assembly, part of the 50S ribosomal subunit.

Its subcellular location is the plastid. The protein resides in the chloroplast. Binds to 23S rRNA. The chain is Large ribosomal subunit protein uL14c from Panax ginseng (Korean ginseng).